The sequence spans 305 residues: Homoserine O-acetyltransferase (305 aa).

Cys142 serves as the catalytic Acyl-thioester intermediate. 2 residues coordinate substrate: Lys163 and Ser192. Catalysis depends on His235, which acts as the Proton acceptor. Glu237 is an active-site residue. Arg249 lines the substrate pocket.

Belongs to the MetA family.

The protein resides in the cytoplasm. It catalyses the reaction L-homoserine + acetyl-CoA = O-acetyl-L-homoserine + CoA. Its pathway is amino-acid biosynthesis; L-methionine biosynthesis via de novo pathway; O-acetyl-L-homoserine from L-homoserine: step 1/1. Functionally, transfers an acetyl group from acetyl-CoA to L-homoserine, forming acetyl-L-homoserine. This is Homoserine O-acetyltransferase from Dinoroseobacter shibae (strain DSM 16493 / NCIMB 14021 / DFL 12).